The primary structure comprises 302 residues: 4-diphosphocytidyl-2-C-methyl-D-erythritol kinase (302 aa).

Residue Lys-20 is part of the active site. 106-116 (PVASGVGGGSG) contacts ATP. Asp-148 is an active-site residue.

This sequence belongs to the GHMP kinase family. IspE subfamily.

It catalyses the reaction 4-CDP-2-C-methyl-D-erythritol + ATP = 4-CDP-2-C-methyl-D-erythritol 2-phosphate + ADP + H(+). It participates in isoprenoid biosynthesis; isopentenyl diphosphate biosynthesis via DXP pathway; isopentenyl diphosphate from 1-deoxy-D-xylulose 5-phosphate: step 3/6. Its function is as follows. Catalyzes the phosphorylation of the position 2 hydroxy group of 4-diphosphocytidyl-2C-methyl-D-erythritol. This chain is 4-diphosphocytidyl-2-C-methyl-D-erythritol kinase, found in Bartonella henselae (strain ATCC 49882 / DSM 28221 / CCUG 30454 / Houston 1) (Rochalimaea henselae).